A 558-amino-acid chain; its full sequence is Dimethylaniline monooxygenase [N-oxide-forming] 4 (558 aa).

FAD contacts are provided by residues 9-13 (GAGVS), E32, and 40-41 (LW). Residues 60 to 61 (TN) and 195 to 198 (TGGD) contribute to the NADP(+) site. The helical transmembrane segment at 517–537 (AWGAPVLLASLLLICKSSLFL) threads the bilayer.

The protein belongs to the FMO family. Requires FAD as cofactor. Liver.

Its subcellular location is the microsome membrane. It localises to the endoplasmic reticulum membrane. It catalyses the reaction N,N-dimethylaniline + NADPH + O2 + H(+) = N,N-dimethylaniline N-oxide + NADP(+) + H2O. Functionally, this protein is involved in the oxidative metabolism of a variety of xenobiotics such as drugs and pesticides. The sequence is that of Dimethylaniline monooxygenase [N-oxide-forming] 4 (FMO4) from Homo sapiens (Human).